A 910-amino-acid polypeptide reads, in one-letter code: Protein translocase subunit SecA (910 aa).

ATP-binding positions include glutamine 87, 105 to 109 (GEGKT), and aspartate 512. Basic and acidic residues-rich tracts occupy residues 561–571 (RHESRRIDNQL), 841–853 (EEERRQQAEELAR), and 880–890 (TFEREARKVGR). Disordered stretches follow at residues 561 to 584 (RHESRRIDNQLRGRSGRQGDAGSS) and 835 to 910 (EEVD…GKIN). Cysteine 894, cysteine 896, cysteine 905, and histidine 906 together coordinate Zn(2+). Basic residues predominate over residues 900–910 (KKYKQCHGKIN).

This sequence belongs to the SecA family. In terms of assembly, monomer and homodimer. Part of the essential Sec protein translocation apparatus which comprises SecA, SecYEG and auxiliary proteins SecDF-YajC and YidC. Requires Zn(2+) as cofactor.

Its subcellular location is the cell inner membrane. It is found in the cytoplasm. The enzyme catalyses ATP + H2O + cellular proteinSide 1 = ADP + phosphate + cellular proteinSide 2.. Functionally, part of the Sec protein translocase complex. Interacts with the SecYEG preprotein conducting channel. Has a central role in coupling the hydrolysis of ATP to the transfer of proteins into and across the cell membrane, serving both as a receptor for the preprotein-SecB complex and as an ATP-driven molecular motor driving the stepwise translocation of polypeptide chains across the membrane. This Photobacterium profundum (strain SS9) protein is Protein translocase subunit SecA.